A 285-amino-acid chain; its full sequence is Diphthine methyl ester synthase (285 aa).

S-adenosyl-L-methionine-binding positions include leucine 9, aspartate 84, glycine 87, 112 to 113, and leucine 163; that span reads SI. Serine 171 carries the post-translational modification Phosphoserine. Valine 225 and histidine 250 together coordinate S-adenosyl-L-methionine.

The protein belongs to the diphthine synthase family.

The enzyme catalyses 2-[(3S)-amino-3-carboxypropyl]-L-histidyl-[translation elongation factor 2] + 4 S-adenosyl-L-methionine = diphthine methyl ester-[translation elongation factor 2] + 4 S-adenosyl-L-homocysteine + 3 H(+). Its pathway is protein modification; peptidyl-diphthamide biosynthesis. Its function is as follows. S-adenosyl-L-methionine-dependent methyltransferase that catalyzes four methylations of the modified target histidine residue in translation elongation factor 2 (EF-2), to form an intermediate called diphthine methyl ester. The four successive methylation reactions represent the second step of diphthamide biosynthesis. This Bos taurus (Bovine) protein is Diphthine methyl ester synthase (DPH5).